We begin with the raw amino-acid sequence, 318 residues long: Porphobilinogen deaminase (318 aa).

The residue at position 241 (C241) is an S-(dipyrrolylmethanemethyl)cysteine.

It belongs to the HMBS family. As to quaternary structure, monomer. The cofactor is dipyrromethane.

The enzyme catalyses 4 porphobilinogen + H2O = hydroxymethylbilane + 4 NH4(+). Its pathway is porphyrin-containing compound metabolism; protoporphyrin-IX biosynthesis; coproporphyrinogen-III from 5-aminolevulinate: step 2/4. Functionally, tetrapolymerization of the monopyrrole PBG into the hydroxymethylbilane pre-uroporphyrinogen in several discrete steps. The polypeptide is Porphobilinogen deaminase (Geobacter metallireducens (strain ATCC 53774 / DSM 7210 / GS-15)).